The primary structure comprises 126 residues: MIRTMLQGKLHRVKVTQADLHYEGSCAIDQDFMDAAGILEYEAIDIYNVDNGQRFSTYAIAGERGSRIISVNGAAARLACVGDKLIICSYVQMSDEQARSHNPKVAYFSGDNELQRQAKAIPVQVA.

The active-site Schiff-base intermediate with substrate; via pyruvic acid is Ser-25. Ser-25 carries the post-translational modification Pyruvic acid (Ser). Residue Thr-57 participates in substrate binding. Residue Tyr-58 is the Proton donor of the active site. Residue Gly-73 to Ala-75 participates in substrate binding.

Belongs to the PanD family. Heterooctamer of four alpha and four beta subunits. Pyruvate serves as cofactor. Post-translationally, is synthesized initially as an inactive proenzyme, which is activated by self-cleavage at a specific serine bond to produce a beta-subunit with a hydroxyl group at its C-terminus and an alpha-subunit with a pyruvoyl group at its N-terminus.

It localises to the cytoplasm. It carries out the reaction L-aspartate + H(+) = beta-alanine + CO2. It participates in cofactor biosynthesis; (R)-pantothenate biosynthesis; beta-alanine from L-aspartate: step 1/1. Its function is as follows. Catalyzes the pyruvoyl-dependent decarboxylation of aspartate to produce beta-alanine. In Pectobacterium carotovorum subsp. carotovorum (strain PC1), this protein is Aspartate 1-decarboxylase.